Here is a 344-residue protein sequence, read N- to C-terminus: Ferrochelatase (344 aa).

2 residues coordinate Fe cation: His214 and Glu295.

Belongs to the ferrochelatase family.

Its subcellular location is the cytoplasm. It catalyses the reaction heme b + 2 H(+) = protoporphyrin IX + Fe(2+). It functions in the pathway porphyrin-containing compound metabolism; protoheme biosynthesis; protoheme from protoporphyrin-IX: step 1/1. In terms of biological role, catalyzes the ferrous insertion into protoporphyrin IX. The protein is Ferrochelatase of Rhizobium johnstonii (strain DSM 114642 / LMG 32736 / 3841) (Rhizobium leguminosarum bv. viciae).